The following is a 177-amino-acid chain: ADP-ribose 1''-phosphate phosphatase (177 aa).

Residues 1–177 (MSNITYVKGN…GDMSFTVYQL (177 aa)) form the Macro domain. Residues 9-11 (GNI), 24-26 (SCN), 31-36 (WGGGIA), and 147-153 (INSGIFG) each bind substrate.

The protein belongs to the POA1 family.

It catalyses the reaction ADP-alpha-D-ribose 1''-phosphate + H2O = ADP-D-ribose + phosphate. Its function is as follows. Highly specific phosphatase involved in the metabolism of ADP-ribose 1''-phosphate (Appr1p) which is produced as a consequence of tRNA splicing. Removes ADP-ribose from glutamate residues in proteins bearing a single ADP-ribose moiety. Inactive towards proteins bearing poly-ADP-ribose. This Saccharomyces cerevisiae (strain YJM789) (Baker's yeast) protein is ADP-ribose 1''-phosphate phosphatase (POA1).